A 98-amino-acid polypeptide reads, in one-letter code: NADH-ubiquinone oxidoreductase chain 4L (98 aa).

The next 3 membrane-spanning stretches (helical) occupy residues 1–21 (MSLVYVNVMIAFLISLLGLLM), 29–49 (SLLCLEGMMLSLFILGTIMIL), and 61–81 (IILLVFAACEAAIGLSLLVMV).

Belongs to the complex I subunit 4L family. In terms of assembly, core subunit of respiratory chain NADH dehydrogenase (Complex I) which is composed of 45 different subunits.

The protein resides in the mitochondrion inner membrane. The catalysed reaction is a ubiquinone + NADH + 5 H(+)(in) = a ubiquinol + NAD(+) + 4 H(+)(out). Functionally, core subunit of the mitochondrial membrane respiratory chain NADH dehydrogenase (Complex I) which catalyzes electron transfer from NADH through the respiratory chain, using ubiquinone as an electron acceptor. Part of the enzyme membrane arm which is embedded in the lipid bilayer and involved in proton translocation. The protein is NADH-ubiquinone oxidoreductase chain 4L (MT-ND4L) of Urotrichus talpoides (Japanese shrew mole).